A 276-amino-acid chain; its full sequence is Omega-amidase NIT2-A (276 aa).

In terms of domain architecture, CN hydrolase spans 4-248 (FKLSLVQFLV…ETVLSAEIDL (245 aa)). The active-site Proton acceptor is E43. K112 functions as the Proton donor in the catalytic mechanism. C153 (nucleophile) is an active-site residue.

The protein belongs to the carbon-nitrogen hydrolase superfamily. NIT1/NIT2 family. As to quaternary structure, homodimer.

It is found in the cytoplasm. The enzyme catalyses 2-oxoglutaramate + H2O = 2-oxoglutarate + NH4(+). The catalysed reaction is 2-oxosuccinamate + H2O = oxaloacetate + NH4(+). Its function is as follows. Has omega-amidase activity. The role of omega-amidase is to remove potentially toxic intermediates by converting 2-oxoglutaramate and 2-oxosuccinamate to biologically useful 2-oxoglutarate and oxaloacetate, respectively. The polypeptide is Omega-amidase NIT2-A (nit2a) (Xenopus laevis (African clawed frog)).